The following is a 374-amino-acid chain: Ribosomal RNA large subunit methyltransferase G (374 aa).

This sequence belongs to the methyltransferase superfamily. RlmG family.

The protein localises to the cytoplasm. It catalyses the reaction guanosine(1835) in 23S rRNA + S-adenosyl-L-methionine = N(2)-methylguanosine(1835) in 23S rRNA + S-adenosyl-L-homocysteine + H(+). Specifically methylates the guanine in position 1835 (m2G1835) of 23S rRNA. The chain is Ribosomal RNA large subunit methyltransferase G from Photobacterium profundum (strain SS9).